Consider the following 320-residue polypeptide: Cytochrome f (320 aa).

A signal peptide spans 1–35; it reads MQNRNTFSWVKEQMTRSISVSIIIYVITRTSISNA. Residues Y36, C56, C59, and H60 each contribute to the heme site. The chain crosses the membrane as a helical span at residues 286-306; that stretch reads VQGLLFFLASIILAQIFLVLK.

It belongs to the cytochrome f family. The 4 large subunits of the cytochrome b6-f complex are cytochrome b6, subunit IV (17 kDa polypeptide, petD), cytochrome f and the Rieske protein, while the 4 small subunits are PetG, PetL, PetM and PetN. The complex functions as a dimer. Heme serves as cofactor.

The protein localises to the plastid. It is found in the chloroplast thylakoid membrane. In terms of biological role, component of the cytochrome b6-f complex, which mediates electron transfer between photosystem II (PSII) and photosystem I (PSI), cyclic electron flow around PSI, and state transitions. The polypeptide is Cytochrome f (Chloranthus spicatus (Chulantree)).